A 247-amino-acid chain; its full sequence is Uridylate kinase (247 aa).

Lysine 15–glycine 18 serves as a coordination point for ATP. Residues glycine 23 to glycine 28 form an involved in allosteric activation by GTP region. A UMP-binding site is contributed by glycine 57. Residues glycine 58 and arginine 62 each contribute to the ATP site. Residues aspartate 77 and threonine 138 to threonine 145 each bind UMP. Positions 165, 171, and 174 each coordinate ATP.

Belongs to the UMP kinase family. Homohexamer.

The protein localises to the cytoplasm. It catalyses the reaction UMP + ATP = UDP + ADP. Its pathway is pyrimidine metabolism; CTP biosynthesis via de novo pathway; UDP from UMP (UMPK route): step 1/1. With respect to regulation, allosterically activated by GTP. Inhibited by UTP. Catalyzes the reversible phosphorylation of UMP to UDP. The protein is Uridylate kinase of Saccharophagus degradans (strain 2-40 / ATCC 43961 / DSM 17024).